Reading from the N-terminus, the 146-residue chain is Large ribosomal subunit protein uL15 (146 aa).

Residues 1 to 13 (MKLHELKPAEGSR) are compositionally biased toward basic and acidic residues. The interval 1–56 (MKLHELKPAEGSRKVRNRVGRGAATGNGKTSGRGQKGQKARSGGSVRPGFEGGQLP) is disordered. Gly residues predominate over residues 23–35 (AATGNGKTSGRGQ).

The protein belongs to the universal ribosomal protein uL15 family. In terms of assembly, part of the 50S ribosomal subunit.

Binds to the 23S rRNA. This Staphylococcus saprophyticus subsp. saprophyticus (strain ATCC 15305 / DSM 20229 / NCIMB 8711 / NCTC 7292 / S-41) protein is Large ribosomal subunit protein uL15.